The sequence spans 416 residues: Phosphoribosylamine--glycine ligase (416 aa).

An ATP-grasp domain is found at 105 to 310 (KSFLKKYRIK…PLELILAATQ (206 aa)). 131-192 (IYSLTPPIVV…EEFLDGYELS (62 aa)) contributes to the ATP binding site. Residues glutamate 281 and asparagine 283 each contribute to the Mg(2+) site.

The protein belongs to the GARS family. Mg(2+) serves as cofactor. The cofactor is Mn(2+).

It carries out the reaction 5-phospho-beta-D-ribosylamine + glycine + ATP = N(1)-(5-phospho-beta-D-ribosyl)glycinamide + ADP + phosphate + H(+). The protein operates within purine metabolism; IMP biosynthesis via de novo pathway; N(1)-(5-phospho-D-ribosyl)glycinamide from 5-phospho-alpha-D-ribose 1-diphosphate: step 2/2. The polypeptide is Phosphoribosylamine--glycine ligase (Campylobacter jejuni subsp. jejuni serotype O:2 (strain ATCC 700819 / NCTC 11168)).